Reading from the N-terminus, the 476-residue chain is RuvB-like helicase 2 (476 aa).

76 to 83 is a binding site for ATP; sequence GPPSTGKT.

Belongs to the RuvB family. May form heterododecamers with RVB1. Component of the SWR1 chromatin remodeling complex, the INO80 chromatin remodeling complex, and of the R2TP complex.

It is found in the nucleus. The catalysed reaction is ATP + H2O = ADP + phosphate + H(+). Functionally, DNA helicase which participates in several chromatin remodeling complexes, including the SWR1 and the INO80 complexes. The SWR1 complex mediates the ATP-dependent exchange of histone H2A for the H2A variant HZT1 leading to transcriptional regulation of selected genes by chromatin remodeling. The INO80 complex remodels chromatin by shifting nucleosomes and is involved in DNA repair. Also involved in pre-rRNA processing. This Candida glabrata (strain ATCC 2001 / BCRC 20586 / JCM 3761 / NBRC 0622 / NRRL Y-65 / CBS 138) (Yeast) protein is RuvB-like helicase 2 (RVB2).